A 753-amino-acid chain; its full sequence is Polyribonucleotide nucleotidyltransferase (753 aa).

Positions 543 and 549 each coordinate Mg(2+). A KH domain is found at 609 to 668 (PRITTVKIPVAKIGELIGPKGKNINALTEETGANISIEDDGTVFISAADGASAEAAIEKI). The S1 motif domain maps to 680–749 (GERFLGTVVK…NRGKISLVPV (70 aa)).

It belongs to the polyribonucleotide nucleotidyltransferase family. It depends on Mg(2+) as a cofactor.

It localises to the cytoplasm. The enzyme catalyses RNA(n+1) + phosphate = RNA(n) + a ribonucleoside 5'-diphosphate. Involved in mRNA degradation. Catalyzes the phosphorolysis of single-stranded polyribonucleotides processively in the 3'- to 5'-direction. In Corynebacterium glutamicum (strain R), this protein is Polyribonucleotide nucleotidyltransferase.